The chain runs to 475 residues: Putative aldehyde dehydrogenase (475 aa).

NAD(+)-binding positions include 146-147 and 223-224; these read WN and GS. Glu245 functions as the Proton acceptor in the catalytic mechanism. Leu246 contributes to the NAD(+) binding site. The active-site Nucleophile is Cys279. Glu379 contacts NAD(+).

It belongs to the aldehyde dehydrogenase family.

It carries out the reaction an aldehyde + NAD(+) + H2O = a carboxylate + NADH + 2 H(+). This is Putative aldehyde dehydrogenase from Staphylococcus aureus (strain USA300).